A 488-amino-acid polypeptide reads, in one-letter code: UDP-N-acetylmuramate--L-alanine ligase (488 aa).

126–132 (GTHGKTT) lines the ATP pocket.

It belongs to the MurCDEF family.

It is found in the cytoplasm. The enzyme catalyses UDP-N-acetyl-alpha-D-muramate + L-alanine + ATP = UDP-N-acetyl-alpha-D-muramoyl-L-alanine + ADP + phosphate + H(+). Its pathway is cell wall biogenesis; peptidoglycan biosynthesis. Functionally, cell wall formation. In Cronobacter sakazakii (strain ATCC BAA-894) (Enterobacter sakazakii), this protein is UDP-N-acetylmuramate--L-alanine ligase.